The following is a 420-amino-acid chain: GDP-mannose transporter 2 (420 aa).

Over residues 1–11 (MASYTPSSSRP) the composition is skewed to polar residues. The segment at 1-21 (MASYTPSSSRPHTPLGLSPRG) is disordered. Residues 1-76 (MASYTPSSSR…KAKKEEVCMP (76 aa)) are Cytoplasmic-facing. The helical transmembrane segment at 77 to 97 (ASTTVLPILSYCVASIMMTVV) threads the bilayer. The Lumenal segment spans residues 98–106 (NKFVVSGRQ). The helical transmembrane segment at 107–127 (FTMTFLLLAIQSFVCVACVWL) threads the bilayer. Residues 128–145 (AKRIGVINFRDWDMNDAK) are Cytoplasmic-facing. A helical membrane pass occupies residues 146–168 (AWFPVSSLLVAVIYTGSKSLQFL). Residues 169–171 (SIP) are Lumenal-facing. The helical transmembrane segment at 172-194 (VYTIFKNLTIILIAYGEVIWFGG) threads the bilayer. Topologically, residues 195–200 (HVTPLT) are cytoplasmic. The chain crosses the membrane as a helical span at residues 201-223 (LCSFFLMVGSSVIAAWADISTTL). At 224–251 (SKLSAGVAVVDPISGADVPLSSISVMDT) the chain is on the lumenal side. The helical transmembrane segment at 252–272 (MNVGYLWMFINCLASAGYVLF) threads the bilayer. Residues 273 to 293 (MRKRIKVTGFKDWDSMFYNNL) are Cytoplasmic-facing. Residues 294–314 (LSIPVLFVFSLIIEDWGAASF) traverse the membrane as a helical segment. The Lumenal segment spans residues 315 to 323 (SRNFPEEGR). Residues 324 to 344 (AFLLSAIAFSGAAAVFISYST) traverse the membrane as a helical segment. Residues 345–355 (AWCVRICGATT) lie on the Cytoplasmic side of the membrane. Residues 356–376 (YSLVGALNKLPVAASGILFFG) traverse the membrane as a helical segment. At 377 to 378 (DP) the chain is on the lumenal side. Residues 379–399 (VNFGNVSAILVGGVSGIVYAV) form a helical membrane-spanning segment. At 400–420 (AKTNQAKVEKSKQARGGESKA) the chain is on the cytoplasmic side.

Belongs to the TPT transporter family. SLC35D subfamily. In terms of assembly, homooligomer.

The protein localises to the golgi apparatus membrane. It localises to the cytoplasmic vesicle membrane. It is found in the endoplasmic reticulum membrane. Functionally, involved in the import of GDP-mannose from the cytoplasm into the Golgi lumen. This is GDP-mannose transporter 2 (GMT2) from Cryptococcus neoformans var. neoformans serotype D (strain B-3501A) (Filobasidiella neoformans).